A 299-amino-acid chain; its full sequence is Taste receptor type 2 member 50 (299 aa).

Residue Met1 is a topological domain, extracellular. Residues 2–22 form a helical membrane-spanning segment; it reads IPFLHIFFSVLILVLFVLGNF. Residues 23–55 are Cytoplasmic-facing; it reads ANGFIALVNFIDWVKRKKISLADQILTALAVSR. The helical transmembrane segment at 56-76 threads the bilayer; it reads VGLLWALLLNWYLTELNPAFY. The Extracellular segment spans residues 77–87; it reads SVELRITSYNA. A helical transmembrane segment spans residues 88–108; that stretch reads WVVTNHFSMWLAASLSIFYLL. The Cytoplasmic segment spans residues 109 to 126; the sequence is KIANFSNLSFLNLKRRVR. Residues 127 to 147 form a helical membrane-spanning segment; sequence SIILVILLGSLLFLVCHLLAV. At 148 to 181 the chain is on the extracellular side; it reads NMDENMWTEEYEGNMTGKMKLRNAAHLSYMTVTT. Asn161 carries N-linked (GlcNAc...) asparagine glycosylation. Residues 182–202 traverse the membrane as a helical segment; that stretch reads LWSFIPFMLSLISFLMLIFSL. At 203-229 the chain is on the cytoplasmic side; the sequence is CKHLKKMQLHGEGSRDPSTTVHIKALQ. The chain crosses the membrane as a helical span at residues 230 to 250; that stretch reads TLISFLLLCAIFFLFLIISVW. At 251 to 259 the chain is on the extracellular side; the sequence is SPRRLQNEP. A helical membrane pass occupies residues 260 to 280; the sequence is VFMVCKAVGNIYLSFDSFVLI. At 281–299 the chain is on the cytoplasmic side; it reads WRTKKLKHIFLLILCQIRC.

It belongs to the G-protein coupled receptor T2R family.

The protein localises to the membrane. Functionally, receptor that may play a role in the perception of bitterness and is gustducin-linked. May play a role in sensing the chemical composition of the gastrointestinal content. The activity of this receptor may stimulate alpha gustducin, mediate PLC-beta-2 activation and lead to the gating of TRPM5. This Macaca mulatta (Rhesus macaque) protein is Taste receptor type 2 member 50 (TAS2R50).